The chain runs to 244 residues: 14-3-3 protein beta/alpha-1 (244 aa).

Methionine 1 is modified (N-acetylmethionine).

The protein belongs to the 14-3-3 family. In terms of assembly, homodimer, and heterodimer with other family members. Expressed in brain, gill, heart, intestine, kidney, liver, ovary, skin, spleen and testis.

It localises to the cytoplasm. In terms of biological role, adapter protein implicated in the regulation of a large spectrum of both general and specialized signaling pathways. Binds to a large number of partners, usually by recognition of a phosphoserine or phosphothreonine motif. Binding generally results in the modulation of the activity of the binding partner. This is 14-3-3 protein beta/alpha-1 from Oncorhynchus mykiss (Rainbow trout).